A 206-amino-acid polypeptide reads, in one-letter code: ATP-dependent Clp protease proteolytic subunit 1 (206 aa).

The active-site Nucleophile is S100. The active site involves H125.

Belongs to the peptidase S14 family. As to quaternary structure, fourteen ClpP subunits assemble into 2 heptameric rings which stack back to back to give a disk-like structure with a central cavity, resembling the structure of eukaryotic proteasomes.

Its subcellular location is the cytoplasm. It carries out the reaction Hydrolysis of proteins to small peptides in the presence of ATP and magnesium. alpha-casein is the usual test substrate. In the absence of ATP, only oligopeptides shorter than five residues are hydrolyzed (such as succinyl-Leu-Tyr-|-NHMec, and Leu-Tyr-Leu-|-Tyr-Trp, in which cleavage of the -Tyr-|-Leu- and -Tyr-|-Trp bonds also occurs).. Cleaves peptides in various proteins in a process that requires ATP hydrolysis. Has a chymotrypsin-like activity. Plays a major role in the degradation of misfolded proteins. This chain is ATP-dependent Clp protease proteolytic subunit 1, found in Myxococcus xanthus (strain DK1622).